The chain runs to 94 residues: Large ribosomal subunit protein bL28 (94 aa).

The protein belongs to the bacterial ribosomal protein bL28 family.

This is Large ribosomal subunit protein bL28 from Novosphingobium aromaticivorans (strain ATCC 700278 / DSM 12444 / CCUG 56034 / CIP 105152 / NBRC 16084 / F199).